A 405-amino-acid polypeptide reads, in one-letter code: Nicotinate phosphoribosyltransferase (405 aa).

Histidine 224 carries the phosphohistidine; by autocatalysis modification.

This sequence belongs to the NAPRTase family. Post-translationally, transiently phosphorylated on a His residue during the reaction cycle. Phosphorylation strongly increases the affinity for substrates and increases the rate of nicotinate D-ribonucleotide production. Dephosphorylation regenerates the low-affinity form of the enzyme, leading to product release.

The enzyme catalyses nicotinate + 5-phospho-alpha-D-ribose 1-diphosphate + ATP + H2O = nicotinate beta-D-ribonucleotide + ADP + phosphate + diphosphate. It functions in the pathway cofactor biosynthesis; NAD(+) biosynthesis; nicotinate D-ribonucleotide from nicotinate: step 1/1. In terms of biological role, catalyzes the synthesis of beta-nicotinate D-ribonucleotide from nicotinate and 5-phospho-D-ribose 1-phosphate at the expense of ATP. This Methanococcoides burtonii (strain DSM 6242 / NBRC 107633 / OCM 468 / ACE-M) protein is Nicotinate phosphoribosyltransferase.